The chain runs to 122 residues: Ribosomal protein eL22-like 1 (122 aa).

Residues S112, S118, and S120 each carry the phosphoserine modification.

Belongs to the eukaryotic ribosomal protein eL22 family.

This is Ribosomal protein eL22-like 1 (Rpl22l1) from Mus musculus (Mouse).